Reading from the N-terminus, the 1408-residue chain is DNA-directed RNA polymerase subunit beta'' (1408 aa).

Belongs to the RNA polymerase beta' chain family. RpoC2 subfamily. In terms of assembly, in plastids the minimal PEP RNA polymerase catalytic core is composed of four subunits: alpha, beta, beta', and beta''. When a (nuclear-encoded) sigma factor is associated with the core the holoenzyme is formed, which can initiate transcription.

The protein localises to the plastid. Its subcellular location is the chloroplast. The enzyme catalyses RNA(n) + a ribonucleoside 5'-triphosphate = RNA(n+1) + diphosphate. In terms of biological role, DNA-dependent RNA polymerase catalyzes the transcription of DNA into RNA using the four ribonucleoside triphosphates as substrates. The chain is DNA-directed RNA polymerase subunit beta'' from Psilotum nudum (Whisk fern).